We begin with the raw amino-acid sequence, 49 residues long: Sperm protamine P1 (49 aa).

It belongs to the protamine P1 family. As to expression, testis.

The protein resides in the nucleus. It localises to the chromosome. In terms of biological role, protamines substitute for histones in the chromatin of sperm during the haploid phase of spermatogenesis. They compact sperm DNA into a highly condensed, stable and inactive complex. The protein is Sperm protamine P1 (PRM1) of Rhinopoma hardwickii (Lesser mouse-tailed bat).